A 661-amino-acid polypeptide reads, in one-letter code: Kyphoscoliosis peptidase (661 aa).

The span at 28–41 shows a compositional bias: polar residues; that stretch reads GTLSDQQANPSSLL. 2 disordered regions span residues 28–47 and 115–136; these read GTLS…GGGF and QGDK…HAYP. Catalysis depends on residues Cys-225, His-267, and Asp-282.

It belongs to the transglutaminase-like superfamily. In terms of assembly, interacts with IGFN1 and FLNC. As to expression, highly expressed in skeletal muscle.

It localises to the cytoplasm. The protein resides in the cytoskeleton. Its subcellular location is the myofibril. It is found in the sarcomere. The protein localises to the z line. Functionally, probable cytoskeleton-associated protease required for normal muscle growth. Involved in function, maturation and stabilization of the neuromuscular junction. May act by cleaving muscle-specific proteins such as FLNC. The protein is Kyphoscoliosis peptidase of Homo sapiens (Human).